Consider the following 136-residue polypeptide: ATP synthase epsilon chain (136 aa).

The protein belongs to the ATPase epsilon chain family. In terms of assembly, F-type ATPases have 2 components, CF(1) - the catalytic core - and CF(0) - the membrane proton channel. CF(1) has five subunits: alpha(3), beta(3), gamma(1), delta(1), epsilon(1). CF(0) has three main subunits: a, b and c.

It is found in the cell inner membrane. Its function is as follows. Produces ATP from ADP in the presence of a proton gradient across the membrane. This chain is ATP synthase epsilon chain, found in Myxococcus xanthus (strain DK1622).